A 158-amino-acid chain; its full sequence is MQGTLSVWLAKRGLVHRSLGFDYQGIETLQIKPEDWHSIAVILYVYGYNYLRSQCAYDVAPGGLLASVYHLTRIEYGVNQAEEVCIKVFTHRSNSRIPSVFWVWKSTDFQERESYDMLGITYDSHPRLKRILMPESWIGWPLRKDYIAPNFYEIQDAY.

This sequence belongs to the complex I 30 kDa subunit family. As to quaternary structure, NDH is composed of at least 16 different subunits, 5 of which are encoded in the nucleus.

The protein resides in the plastid. It localises to the chloroplast thylakoid membrane. It catalyses the reaction a plastoquinone + NADH + (n+1) H(+)(in) = a plastoquinol + NAD(+) + n H(+)(out). It carries out the reaction a plastoquinone + NADPH + (n+1) H(+)(in) = a plastoquinol + NADP(+) + n H(+)(out). Functionally, NDH shuttles electrons from NAD(P)H:plastoquinone, via FMN and iron-sulfur (Fe-S) centers, to quinones in the photosynthetic chain and possibly in a chloroplast respiratory chain. The immediate electron acceptor for the enzyme in this species is believed to be plastoquinone. Couples the redox reaction to proton translocation, and thus conserves the redox energy in a proton gradient. The polypeptide is NAD(P)H-quinone oxidoreductase subunit J, chloroplastic (Aethionema grandiflorum (Persian stone-cress)).